Consider the following 178-residue polypeptide: Ribosome maturation factor RimM (178 aa).

One can recognise a PRC barrel domain in the interval 101 to 178 (ADEYYWYQLE…VMRVEWDADF (78 aa)).

The protein belongs to the RimM family. As to quaternary structure, binds ribosomal protein uS19.

Its subcellular location is the cytoplasm. An accessory protein needed during the final step in the assembly of 30S ribosomal subunit, possibly for assembly of the head region. Essential for efficient processing of 16S rRNA. May be needed both before and after RbfA during the maturation of 16S rRNA. It has affinity for free ribosomal 30S subunits but not for 70S ribosomes. The protein is Ribosome maturation factor RimM of Pseudomonas fluorescens (strain Pf0-1).